We begin with the raw amino-acid sequence, 694 residues long: Katanin p80 WD40 repeat-containing subunit B1 (694 aa).

WD repeat units lie at residues 18–58 (AHSS…CIMS), 61–100 (GHTS…ILRT), 103–142 (GHKA…CVFR), 145–186 (GHTQ…TEFT), 188–226 (HTSA…MIGS), and 229–269 (GETG…DVVH). Disordered stretches follow at residues 319 to 410 (KPIP…PFPA) and 470 to 492 (TTSA…STGI). Polar residues predominate over residues 327–349 (ALGTTLRRNYERPTTSCTGQEMK). A compositionally biased stretch (basic and acidic residues) spans 350-378 (QSSEADRRSPEGERRSPSSEDEKEDKESS). Positions 470–481 (TTSASSPSRPVV) are enriched in low complexity. Residues 482-492 (NTTKPKPSTGI) are compositionally biased toward polar residues.

The protein belongs to the WD repeat KATNB1 family. As to quaternary structure, interacts with katna1. This interaction enhances the microtubule binding and severing activity of katna1 and also targets this activity to the centrosome.

Its subcellular location is the cytoplasm. The protein resides in the cytoskeleton. It is found in the microtubule organizing center. The protein localises to the centrosome. It localises to the spindle pole. Its subcellular location is the spindle. Functionally, participates in a complex which severs microtubules in an ATP-dependent manner. May act to target the enzymatic subunit of this complex to sites of action such as the centrosome. Microtubule severing may promote rapid reorganization of cellular microtubule arrays and the release of microtubules from the centrosome following nucleation. This is Katanin p80 WD40 repeat-containing subunit B1 (katnb1) from Danio rerio (Zebrafish).